The sequence spans 345 residues: MTPDPRLADSAFLKAARGEPVPHTPVWYMRQAGRSLPEYLAVREGIGMLESCMDPDLVVEITLQPVRRYGVDAAIFFSDIVLPLKAVGVDLDIKPGVGPVVAHPVRTLADVEAIPDLTPEHVPFITEAVRGLVGELGGTPLIGFAGAPFTVASYLVEGGPSKEHARTKAMMFGAPDVWDALLRKIAGISASYLEVQVAAGASAVQLFDSWAGALTPADYRAFVMPHSARVLERAGALGVPRIHFGVGTANLLGLMGEAGADVVGVDWRTPLAHAIALVGDRGVQGNLDPTLVFAPTEVMTARAAEIVEAGRAARGHIFNLGHGVIPSTDPDQLKRLTEFVQTYPR.

Substrate-binding positions include 30–34 (RQAGR), Asp-79, Tyr-154, Ser-209, and His-322.

This sequence belongs to the uroporphyrinogen decarboxylase family. Homodimer.

The protein localises to the cytoplasm. It carries out the reaction uroporphyrinogen III + 4 H(+) = coproporphyrinogen III + 4 CO2. It participates in porphyrin-containing compound metabolism; protoporphyrin-IX biosynthesis; coproporphyrinogen-III from 5-aminolevulinate: step 4/4. Catalyzes the decarboxylation of four acetate groups of uroporphyrinogen-III to yield coproporphyrinogen-III. In Nocardioides sp. (strain ATCC BAA-499 / JS614), this protein is Uroporphyrinogen decarboxylase.